A 306-amino-acid chain; its full sequence is Pantothenate kinase (306 aa).

Residue 91-98 (GSVAVGKS) coordinates ATP.

It belongs to the prokaryotic pantothenate kinase family.

The protein localises to the cytoplasm. It carries out the reaction (R)-pantothenate + ATP = (R)-4'-phosphopantothenate + ADP + H(+). It participates in cofactor biosynthesis; coenzyme A biosynthesis; CoA from (R)-pantothenate: step 1/5. The protein is Pantothenate kinase of Streptococcus mutans serotype c (strain ATCC 700610 / UA159).